A 405-amino-acid polypeptide reads, in one-letter code: Mevalonate 3,5-bisphosphate decarboxylase (405 aa).

The protein belongs to the mevalonate 3,5-bisphosphate decarboxylase family. In terms of assembly, homodimer.

It catalyses the reaction (R)-3,5-bisphosphomevalonate + H(+) = isopentenyl phosphate + phosphate + CO2. It participates in isoprenoid biosynthesis; isopentenyl diphosphate biosynthesis via mevalonate pathway. Its function is as follows. Catalyzes the ATP-independent decarboxylation of (R)-mevalonate 3,5-bisphosphate to isopentenyl phosphate. Functions in an alternative mevalonate pathway, only present in extreme acidophiles of the Thermoplasmatales order, which passes through mevalonate 3-phosphate rather than mevalonate 5-phosphate. The chain is Mevalonate 3,5-bisphosphate decarboxylase from Thermoplasma acidophilum (strain ATCC 25905 / DSM 1728 / JCM 9062 / NBRC 15155 / AMRC-C165).